The chain runs to 341 residues: UDP-3-O-acylglucosamine N-acyltransferase (341 aa).

Catalysis depends on histidine 239, which acts as the Proton acceptor.

This sequence belongs to the transferase hexapeptide repeat family. LpxD subfamily. Homotrimer.

The catalysed reaction is a UDP-3-O-[(3R)-3-hydroxyacyl]-alpha-D-glucosamine + a (3R)-hydroxyacyl-[ACP] = a UDP-2-N,3-O-bis[(3R)-3-hydroxyacyl]-alpha-D-glucosamine + holo-[ACP] + H(+). The protein operates within bacterial outer membrane biogenesis; LPS lipid A biosynthesis. In terms of biological role, catalyzes the N-acylation of UDP-3-O-acylglucosamine using 3-hydroxyacyl-ACP as the acyl donor. Is involved in the biosynthesis of lipid A, a phosphorylated glycolipid that anchors the lipopolysaccharide to the outer membrane of the cell. The polypeptide is UDP-3-O-acylglucosamine N-acyltransferase (Shewanella sp. (strain MR-4)).